The chain runs to 134 residues: Large ribosomal subunit protein eL14z (134 aa).

It belongs to the eukaryotic ribosomal protein eL14 family.

The chain is Large ribosomal subunit protein eL14z (RPL14A) from Arabidopsis thaliana (Mouse-ear cress).